The following is a 523-amino-acid chain: MGCNQSKSANDVRGNKVNHVNSKKKNNKREDTNDGEEIAINPGMYVRKKEGKIGESYFKVRKLGSGAYGEVLLCKEKNGHSEKAIKVIKKSQFDKGRYSDDNKNIEKFHEEIYNEISLLKSLDHPNIIKLFDVFEDKKYFYLVTEFYEGGELFEQIINRHKFDECDAANIMKQILSGICYLHKHNIVHRDIKPENILLENKNSLLNIKIVDFGLSSFFSKDYKLRDRLGTAYYIAPEVLKKKYNEKCDVWSCGVIMYILLCGYPPFGGQNDQDIIKKVEKGKYYFDFNDWKNISDEAKELIKLMLTYDYNKRCTAEEALNSRWIKKYANNINKSDQKTLCGALSNMRKFEGSQKLAQAAILFIGSKLTTLEERKELTDIFKKLDKNGDGQLDKKELIEGYNVLRNFKNELGELKNVEEEVDNILKEVDFDKNGYIEYSEFISVCMDKQILFSEERLRRAFNLFDTDKSGKITKEELANLFGLTSISEKTWNDVLGEADQNKDNMIDFDEFVSMMHKICDHKTF.

Residues M1 to E36 form a disordered region. G2 carries N-myristoyl glycine lipidation. A lipid anchor (S-palmitoyl cysteine) is attached at C3. Residues Y57–I324 enclose the Protein kinase domain. Residues L63–V71, K86, and K90 contribute to the ATP site. S65 is subject to Phosphoserine. S117 is modified (phosphoserine). Residue D190 is the Proton acceptor of the active site. S216 and S219 each carry phosphoserine. The residue at position 230 (T230) is a Phosphothreonine. S334 carries the post-translational modification Phosphoserine. Positions N345–S352 match the J domain autoinhibitory motif motif. The tract at residues N345 to I363 is j domain. Residues Q353 to I363 carry the J domain interacts with the EF-hand domains motif. 4 consecutive EF-hand domains span residues E371–F406, N415–L450, F451–S486, and E487–H520. Ca(2+) is bound by residues D384, N386, D388, Q390, E395, D428, D430, N432, Y434, E439, D464, D466, S468, K470, E475, D498, N500, D502, M504, and E509.

The protein belongs to the protein kinase superfamily. Ser/Thr protein kinase family. CDPK subfamily. In terms of assembly, monomer. The cofactor is Mg(2+). In terms of processing, myristoylated. Myristoylation and palmitoylation are required for the localization to the parasitophorous vacuole membrane. Post-translationally, palmitoylated. Palmitoylation increases in merozoites in response to low level of extracellular K(+) in the host blood. Myristoylation and palmitoylation are required for the localization to the parasitophorous vacuole membrane. Phosphorylation at Thr-230 may regulate CDPK1 kinase activity. Phosphorylation increases in response to an increase in intracellular Ca(2+) levels. Autophosphorylated in vitro. Autophosphorylation does not affect membrane localization in vitro.

The protein localises to the membrane. It localises to the cell membrane. Its subcellular location is the parasitophorous vacuole membrane. The protein resides in the cytoplasm. It is found in the cell projection. The protein localises to the cilium. It localises to the flagellum. Its subcellular location is the host cell membrane. It catalyses the reaction L-seryl-[protein] + ATP = O-phospho-L-seryl-[protein] + ADP + H(+). The enzyme catalyses L-threonyl-[protein] + ATP = O-phospho-L-threonyl-[protein] + ADP + H(+). With respect to regulation, activated by calcium. Upon calcium binding to the EF-hand domains, the C-terminus of the junction domain (J domain) undergoes a conformational change which results in the dissociation of the pseudo-substrate inhibitory motif from the catalytic domain. This, in turn may facilitate the autophosphorylation of the activation loop at Thr-230, which leads to the kinase activation. In terms of biological role, calcium-dependent protein kinase which acts as a sensor and effector of intracellular Ca(2+) levels probably in part downstream of cGMP-activated PKG kinase. During the liver stage, involved in sporozoite motility and thus in sporozoite invasion of host hepatocytes, probably together with CDPK4 and CDPK5. In the mosquito midgut and during the last stage of male gamete exflagellation, may play a role in the rupture of the host erythrocyte membrane. In the mosquito midgut, required for the differentiation of the zygote into the ookinete by promoting the translational activation of a subset of repressed mRNAs; these mRNAs are kept repressed in the zygote by the DOZI- or CITH-containing mRNP complexes. Dispensable during the asexual blood stage. This chain is Calcium-dependent protein kinase 1, found in Plasmodium berghei (strain Anka).